The chain runs to 26 residues: MNQKHLLRFIKKSYRVDADRVVYDAK.

The protein belongs to the metallo-dependent hydrolases superfamily. Adenosine and AMP deaminases family. As to quaternary structure, homotetramer.

The catalysed reaction is AMP + H2O + H(+) = IMP + NH4(+). The protein operates within purine metabolism; IMP biosynthesis via salvage pathway; IMP from AMP: step 1/1. Functionally, AMP deaminase plays a critical role in energy metabolism. This is AMP deaminase 1 (AMPD1) from Gallus gallus (Chicken).